The chain runs to 512 residues: Glutathione-binding protein GsiB (512 aa).

The signal sequence occupies residues 1–26 (MARAVHRSGLVALGIATALMASCAFA).

The protein belongs to the bacterial solute-binding protein 5 family. In terms of assembly, the complex is composed of two ATP-binding proteins (GsiA), two transmembrane proteins (GsiC and GsiD) and a solute-binding protein (GsiB). In the presence of glutathione, interacts with the transmembrane proteins GsiC and GsiD.

The protein localises to the periplasm. Its function is as follows. Part of the ABC transporter complex GsiABCD involved in glutathione import. Binds glutathione. This chain is Glutathione-binding protein GsiB, found in Escherichia coli (strain K12).